We begin with the raw amino-acid sequence, 317 residues long: 4-diphosphocytidyl-2-C-methyl-D-erythritol kinase (317 aa).

Lysine 11 is a catalytic residue. Proline 99–threonine 109 lines the ATP pocket. Aspartate 141 is a catalytic residue.

Belongs to the GHMP kinase family. IspE subfamily.

The enzyme catalyses 4-CDP-2-C-methyl-D-erythritol + ATP = 4-CDP-2-C-methyl-D-erythritol 2-phosphate + ADP + H(+). It participates in isoprenoid biosynthesis; isopentenyl diphosphate biosynthesis via DXP pathway; isopentenyl diphosphate from 1-deoxy-D-xylulose 5-phosphate: step 3/6. Functionally, catalyzes the phosphorylation of the position 2 hydroxy group of 4-diphosphocytidyl-2C-methyl-D-erythritol. This is 4-diphosphocytidyl-2-C-methyl-D-erythritol kinase from Trichormus variabilis (strain ATCC 29413 / PCC 7937) (Anabaena variabilis).